The following is a 181-amino-acid chain: Trafficking protein particle complex subunit 3-like protein (181 aa).

Residue cysteine 68 is the site of S-palmitoyl cysteine attachment.

The protein belongs to the TRAPP small subunits family. BET3 subfamily. As to quaternary structure, homodimer. Component of the multisubunit TRAPP (transport protein particle) complex, which includes at least TRAPPC2, TRAPPC2L, TRAPPC3, TRAPPC3L, TRAPPC4, TRAPPC5, TRAPPC8, TRAPPC9, TRAPPC10, TRAPPC11 and TRAPPC12.

The protein resides in the golgi apparatus. It is found in the cis-Golgi network. It localises to the endoplasmic reticulum. Its function is as follows. May play a role in vesicular transport from endoplasmic reticulum to Golgi. The protein is Trafficking protein particle complex subunit 3-like protein (TRAPPC3L) of Homo sapiens (Human).